Reading from the N-terminus, the 646-residue chain is Glutamine--tRNA ligase protein virJ (646 aa).

A disordered region spans residues 25-65; that stretch reads NELKKRIQKRARKAAAAANRSNAQQEKGNKPAANKPAAKPE. Residues 38-61 are compositionally biased toward low complexity; sequence AAAAANRSNAQQEKGNKPAANKPA. Residues 98 to 108 carry the 'HIGH' region motif; that stretch reads PEPNGYLHLGH. ATP contacts are provided by residues 99 to 101 and 105 to 111; these read EPN and HLGHAKA. L-glutamine contacts are provided by D147 and Y296. Residues T315, 344 to 345, and 352 to 354 contribute to the ATP site; these read RL and MSK. The short motif at 351–355 is the 'KMSKS' region element; that stretch reads IMSKR.

Belongs to the class-I aminoacyl-tRNA synthetase family.

The catalysed reaction is tRNA(Gln) + L-glutamine + ATP = L-glutaminyl-tRNA(Gln) + AMP + diphosphate. Glutamine--tRNA ligase; part of the gene cluster that mediates the biosynthesis of virensols and trichoxide, fungal natural products that contain or are derived from a salicylaldehyde core. VirJ does not seem to play any role in virensols and trichoxide biosynthesis. The polypeptide is Glutamine--tRNA ligase protein virJ (Hypocrea virens (strain Gv29-8 / FGSC 10586) (Gliocladium virens)).